A 122-amino-acid chain; its full sequence is uncharacterized protein (122 aa).

The Cytoplasmic segment spans residues Met-1–Ala-24. The helical transmembrane segment at Phe-25–Val-45 threads the bilayer. Residues Pro-46–Asn-57 are Extracellular-facing. The helical transmembrane segment at Ser-58–Leu-78 threads the bilayer. The Cytoplasmic segment spans residues Lys-79–Ala-122.

It localises to the membrane. This is an uncharacterized protein from Saccharomyces cerevisiae (strain ATCC 204508 / S288c) (Baker's yeast).